The primary structure comprises 390 residues: Neuromedin-B receptor (390 aa).

Positions 1–19 are enriched in polar residues; the sequence is MPSKSLSNLSVTTGANESG. The tract at residues 1–22 is disordered; that stretch reads MPSKSLSNLSVTTGANESGSVP. Over 1 to 41 the chain is Extracellular; it reads MPSKSLSNLSVTTGANESGSVPEGWERDFLPASDGTTTELV. N-linked (GlcNAc...) asparagine glycans are attached at residues N8 and N16. The chain crosses the membrane as a helical span at residues 42–65; that stretch reads IRCVIPSLYLLIITVGLLGNIMLV. Residues 66–79 are Cytoplasmic-facing; it reads KIFITNSAMRSVPN. A helical transmembrane segment spans residues 80-99; that stretch reads IFISNLAAGDLLLLLTCVPV. The Extracellular portion of the chain corresponds to 100–117; that stretch reads DASRYFFDEWMFGKVGCK. C116 and C198 form a disulfide bridge. Residues 118-139 form a helical membrane-spanning segment; sequence LIPVIQLTSVGVSVFTLTALSA. The Cytoplasmic portion of the chain corresponds to 140-156; that stretch reads DRYRAIVNPMDMQTSGA. Residues 157-177 form a helical membrane-spanning segment; that stretch reads LLRTCVKAMGIWVVSVLLAVP. Residues 178–211 are Extracellular-facing; it reads EAVFSEVARISSLDNSSFTACIPYPQTDELHPKI. An N-linked (GlcNAc...) asparagine glycan is attached at N192. The chain crosses the membrane as a helical span at residues 212–235; it reads HSVLIFLVYFLIPLAIISIYYYHI. At 236–266 the chain is on the cytoplasmic side; that stretch reads AKTLIKSAHNLPGEYNEHTKKQMETRKRLAK. A helical transmembrane segment spans residues 267–287; sequence IVLVFVGCFIFCWFPNHILYM. At 288-299 the chain is on the extracellular side; that stretch reads YRSFNYNEIDPS. Residues 300 to 327 form a helical membrane-spanning segment; that stretch reads LGHMIVTLVARVLSFGNSCVNPFALYLL. Topologically, residues 328-390 are cytoplasmic; the sequence is SESFRRHFNS…GHSMKQEMAL (63 aa). C341 carries S-palmitoyl cysteine lipidation. S352 carries the post-translational modification Phosphoserine.

Belongs to the G-protein coupled receptor 1 family. As to expression, expressed in epididymis (at protein level).

It localises to the cell membrane. In terms of biological role, receptor for neuromedin-B. Contributes to the maintenance of basal sigh rate through signaling in the pre-Botzinger complex, a cluster of several thousand neurons in the ventrolateral medulla responsible for inspiration during respiratory activity. Contributes to the induction of sneezing following exposure to chemical irritants or allergens which causes release of NMB by nasal sensory neurons and activation of NMBR-expressing neurons in the sneeze-evoking region of the brainstem. These in turn activate neurons of the caudal ventral respiratory group, giving rise to the sneezing response. Contributes to induction of acute itch, possibly through its activation on dorsal root ganglion neurons by the NMB peptide. Plays a role in the innate immune response to influenza A virus infection by enhancing interferon alpha expression and reducing expression of IL6. Plays a role in CSF1-induced proliferation of osteoclast precursors by contributing to the positive regulation of the expression of the CSF1 receptor CSF1R. The protein is Neuromedin-B receptor (NMBR) of Homo sapiens (Human).